The following is a 236-amino-acid chain: MLKYQQIATEIETYIEEHQLQQGDKLPVLETLMAQFEVSKSTITKSLELLEQKGAIFQVRGSGIFVRKHKRKGYISLLSNQGFKKDLEDFNVTSKVIELDVRKPTPEAAENLNIGMDEDIYYVKRVRYINGQTLCYEESYYTKSIVTYLNNEIVSHSIFHYIREGLGLKIGFSDLFLHVGQLNEEEAEYLGLEAGLPKLYIESIFHLTNGQPFDYSKISYNYEQSQFVVQANSFLL.

The 69-residue stretch at 1-69 (MLKYQQIATE…RGSGIFVRKH (69 aa)) folds into the HTH gntR-type domain. The H-T-H motif DNA-binding region spans 29–48 (LETLMAQFEVSKSTITKSLE).

This is an uncharacterized protein from Bacillus subtilis (strain 168).